We begin with the raw amino-acid sequence, 311 residues long: Olfactory receptor 2Y1 (311 aa).

Residues 1–25 are Extracellular-facing; sequence MGSFNTSFEDGFILVGFSDWPQLEP. Asn-5 is a glycosylation site (N-linked (GlcNAc...) asparagine). A helical membrane pass occupies residues 26-49; sequence ILFVFIFIFYSLTLFGNTIIIALS. Residues 50 to 57 lie on the Cytoplasmic side of the membrane; the sequence is WLDLRLHT. Residues 58 to 79 form a helical membrane-spanning segment; sequence PMYFFLSHLSLLDLCFTTSTVP. The Extracellular portion of the chain corresponds to 80 to 100; that stretch reads QLLINLCGVDRTITRGGCVAQ. Cys-97 and Cys-188 are joined by a disulfide. A helical membrane pass occupies residues 101 to 120; that stretch reads LFIYLALGSTECVLLVVMAF. The Cytoplasmic portion of the chain corresponds to 121–139; that stretch reads DRYAAVCRPLHYMAIMHPH. The chain crosses the membrane as a helical span at residues 140–158; sequence LCQTLAIASWGAGFVNSLI. Over 159–194 the chain is Extracellular; it reads QTGLAMAMPLCGHRLNHFFCEMPVFLKLACADTEGT. Residues 195–218 form a helical membrane-spanning segment; sequence EAKMFVARVIVVAVPAALILGSYV. Residues 219–235 lie on the Cytoplasmic side of the membrane; it reads HIAHAVLRVKSTAGRRK. The helical transmembrane segment at 236-258 threads the bilayer; the sequence is AFGTCGSHLLVVFLFYGSAIYTY. Residues 259-271 lie on the Extracellular side of the membrane; sequence LQSIHNYSEREGK. Asn-264 carries an N-linked (GlcNAc...) asparagine glycan. Residues 272–291 form a helical membrane-spanning segment; sequence FVALFYTIITPILNPLIYTL. Residues 292-311 are Cytoplasmic-facing; sequence RNKDVKGALWKVLWRGRDSG.

The protein belongs to the G-protein coupled receptor 1 family.

It is found in the cell membrane. Its function is as follows. Odorant receptor. The sequence is that of Olfactory receptor 2Y1 (OR2Y1) from Homo sapiens (Human).